The chain runs to 81 residues: ATP synthase subunit c (81 aa).

2 helical membrane-spanning segments follow: residues 5–25 (IAAG…IGAG) and 57–77 (VGLV…FVFA).

The protein belongs to the ATPase C chain family. In terms of assembly, F-type ATPases have 2 components, F(1) - the catalytic core - and F(0) - the membrane proton channel. F(1) has five subunits: alpha(3), beta(3), gamma(1), delta(1), epsilon(1). F(0) has three main subunits: a(1), b(2) and c(10-14). The alpha and beta chains form an alternating ring which encloses part of the gamma chain. F(1) is attached to F(0) by a central stalk formed by the gamma and epsilon chains, while a peripheral stalk is formed by the delta and b chains.

Its subcellular location is the cell membrane. Functionally, f(1)F(0) ATP synthase produces ATP from ADP in the presence of a proton or sodium gradient. F-type ATPases consist of two structural domains, F(1) containing the extramembraneous catalytic core and F(0) containing the membrane proton channel, linked together by a central stalk and a peripheral stalk. During catalysis, ATP synthesis in the catalytic domain of F(1) is coupled via a rotary mechanism of the central stalk subunits to proton translocation. Key component of the F(0) channel; it plays a direct role in translocation across the membrane. A homomeric c-ring of between 10-14 subunits forms the central stalk rotor element with the F(1) delta and epsilon subunits. This is ATP synthase subunit c from Mycobacterium bovis (strain ATCC BAA-935 / AF2122/97).